Reading from the N-terminus, the 373-residue chain is 3 beta-hydroxysteroid dehydrogenase/Delta 5--&gt;4-isomerase type 1 (373 aa).

NADP(+)-binding positions include 10 to 15 (GAGGFL), Y155, and K159. K159 serves as the catalytic Proton donor. The chain crosses the membrane as a helical span at residues 288-308 (VALLYWLGFLLELVSFLLRPV).

Belongs to the 3-beta-HSD family. High levels in adrenal gland, kidney and male liver. Low levels in female liver.

The protein localises to the endoplasmic reticulum membrane. It localises to the mitochondrion membrane. It carries out the reaction a 3beta-hydroxy-Delta(5)-steroid + NAD(+) = a 3-oxo-Delta(5)-steroid + NADH + H(+). It catalyses the reaction pregnenolone + NAD(+) = pregn-5-ene-3,20-dione + NADH + H(+). The catalysed reaction is 3beta-hydroxyandrost-5-en-17-one + NAD(+) = androst-5-ene-3,17-dione + NADH + H(+). The enzyme catalyses androst-5-en-3beta,17beta-diol + NAD(+) = 17beta-hydroxy-androst-5-en-3-one + NADH + H(+). It carries out the reaction a 3beta-hydroxysteroid + NADP(+) = a 3-oxosteroid + NADPH + H(+). It catalyses the reaction 5alpha-androstane-3beta,17beta-diol + NADP(+) = 17beta-hydroxy-5alpha-androstan-3-one + NADPH + H(+). The catalysed reaction is 3beta-hydroxy-5alpha-androstan-17-one + NADP(+) = 5alpha-androstan-3,17-dione + NADPH + H(+). The enzyme catalyses a 3-oxo-Delta(5)-steroid = a 3-oxo-Delta(4)-steroid. It carries out the reaction pregn-5-ene-3,20-dione = progesterone. It catalyses the reaction androst-5-ene-3,17-dione = androst-4-ene-3,17-dione. The catalysed reaction is 17beta-hydroxy-androst-5-en-3-one = testosterone. The enzyme catalyses 5alpha-androstane-3beta,17beta-diol + NAD(+) = 17beta-hydroxy-5alpha-androstan-3-one + NADH + H(+). Its pathway is steroid hormone biosynthesis. It functions in the pathway steroid metabolism. Functionally, a bifunctional enzyme responsible for the oxidation and isomerization of 3beta-hydroxy-Delta(5)-steroid precursors to 3-oxo-Delta(4)-steroids, an essential step in steroid hormone biosynthesis. Specifically catalyzes the conversion of pregnenolone to progesterone, 17alpha-hydroxypregnenolone to 17alpha-hydroxyprogesterone, dehydroepiandrosterone (DHEA) to 4-androstenedione, and androstenediol to testosterone. Additionally, catalyzes the interconversion between 3beta-hydroxy and 3-oxo-5alpha-androstane steroids controlling the bioavalability of the active forms. Specifically converts dihydrotestosterone to its inactive form 5alpha-androstanediol, that does not bind androgen receptor/AR. Also converts androstanedione, a precursor of testosterone and estrone, to epiandrosterone. Expected to use NAD(+) as preferred electron donor for the 3-beta-hydroxy-steroid dehydrogenase activity and NADPH for the 3-ketosteroid reductase activity. This Mesocricetus auratus (Golden hamster) protein is 3 beta-hydroxysteroid dehydrogenase/Delta 5--&gt;4-isomerase type 1 (HSD3B1).